A 241-amino-acid polypeptide reads, in one-letter code: Triosephosphate isomerase (241 aa).

9 to 11 (NWK) provides a ligand contact to substrate. His-96 serves as the catalytic Electrophile. Glu-165 (proton acceptor) is an active-site residue. Residues Gly-171, Ser-204, and 225 to 226 (GG) contribute to the substrate site.

This sequence belongs to the triosephosphate isomerase family. In terms of assembly, homodimer.

It is found in the cytoplasm. It carries out the reaction D-glyceraldehyde 3-phosphate = dihydroxyacetone phosphate. It functions in the pathway carbohydrate biosynthesis; gluconeogenesis. Its pathway is carbohydrate degradation; glycolysis; D-glyceraldehyde 3-phosphate from glycerone phosphate: step 1/1. Its function is as follows. Involved in the gluconeogenesis. Catalyzes stereospecifically the conversion of dihydroxyacetone phosphate (DHAP) to D-glyceraldehyde-3-phosphate (G3P). This is Triosephosphate isomerase from Nostoc sp. (strain PCC 7120 / SAG 25.82 / UTEX 2576).